Here is a 62-residue protein sequence, read N- to C-terminus: Photosystem II reaction center protein H (62 aa).

A helical membrane pass occupies residues 30–50 (PVMAGIGFMLLIFLVTILQIY).

The protein belongs to the PsbH family. In terms of assembly, PSII is composed of 1 copy each of membrane proteins PsbA, PsbB, PsbC, PsbD, PsbE, PsbF, PsbH, PsbI, PsbJ, PsbK, PsbL, PsbM, PsbT, PsbX, PsbY, Psb30/Ycf12, peripheral proteins PsbO, CyanoQ (PsbQ), PsbU, PsbV and a large number of cofactors. It forms dimeric complexes.

The protein localises to the cellular thylakoid membrane. Its function is as follows. One of the components of the core complex of photosystem II (PSII), required for its stability and/or assembly. PSII is a light-driven water:plastoquinone oxidoreductase that uses light energy to abstract electrons from H(2)O, generating O(2) and a proton gradient subsequently used for ATP formation. It consists of a core antenna complex that captures photons, and an electron transfer chain that converts photonic excitation into a charge separation. The chain is Photosystem II reaction center protein H from Prochlorococcus marinus (strain MIT 9303).